The following is a 388-amino-acid chain: Succinate--CoA ligase [ADP-forming] subunit beta (388 aa).

The region spanning 9–244 (KEIFRSMGVA…LEEEDPKEIE (236 aa)) is the ATP-grasp domain. ATP contacts are provided by residues K46, 53–55 (GRG), E99, C102, and E107. Positions 199 and 213 each coordinate Mg(2+). Residues N264 and 321-323 (GIM) each bind substrate.

Belongs to the succinate/malate CoA ligase beta subunit family. Heterotetramer of two alpha and two beta subunits. The cofactor is Mg(2+).

The catalysed reaction is succinate + ATP + CoA = succinyl-CoA + ADP + phosphate. It catalyses the reaction GTP + succinate + CoA = succinyl-CoA + GDP + phosphate. It functions in the pathway carbohydrate metabolism; tricarboxylic acid cycle; succinate from succinyl-CoA (ligase route): step 1/1. Succinyl-CoA synthetase functions in the citric acid cycle (TCA), coupling the hydrolysis of succinyl-CoA to the synthesis of either ATP or GTP and thus represents the only step of substrate-level phosphorylation in the TCA. The beta subunit provides nucleotide specificity of the enzyme and binds the substrate succinate, while the binding sites for coenzyme A and phosphate are found in the alpha subunit. This is Succinate--CoA ligase [ADP-forming] subunit beta from Staphylococcus aureus (strain Mu3 / ATCC 700698).